The following is a 303-amino-acid chain: MNPQELKSIMGSGLLSFPLTDFDANGDFNKKGYEKRLEWLAPYGASALFAAGGTGEFFSLTGDEYPGIIQTAVDTCRGVVPIIAGAGGPTRFAIQCAQAAEKAGAHGILLLPHYLTEAGQEGLAAHVEAVCKSVKFGVIVYNRATSRLKPETLAALAERNPNLVGFKDGVGDIEAMVAIYQKMGDRFAYLGGLPTAEVYAAAYKALGTPVYSSAVFNFIPKTAMDFYKAVAADDLPTQHRLLKNFFMPYLDLRNRVPGYAVSIVKAGAKIVGHDAGPVRTPLTDLQPAEMEQLKALIDALGPQ.

This sequence belongs to the DapA family.

It carries out the reaction 5-dehydro-4-deoxy-D-glucarate + H(+) = 2,5-dioxopentanoate + CO2 + H2O. It functions in the pathway carbohydrate acid metabolism; D-glucarate degradation; 2,5-dioxopentanoate from D-glucarate: step 2/2. The polypeptide is Probable 5-dehydro-4-deoxyglucarate dehydratase (Variovorax paradoxus (strain S110)).